The chain runs to 466 residues: Ribulose bisphosphate carboxylase large chain (466 aa).

Lysine 4 carries the post-translational modification N6,N6,N6-trimethyllysine. The substrate site is built by asparagine 113 and threonine 163. Catalysis depends on lysine 165, which acts as the Proton acceptor. Lysine 167 contacts substrate. The Mg(2+) site is built by lysine 191, aspartate 193, and glutamate 194. An N6-carboxylysine modification is found at lysine 191. Catalysis depends on histidine 284, which acts as the Proton acceptor. The substrate site is built by arginine 285, histidine 317, and serine 369.

Belongs to the RuBisCO large chain family. Type I subfamily. Heterohexadecamer of 8 large chains and 8 small chains; disulfide-linked. The disulfide link is formed within the large subunit homodimers. It depends on Mg(2+) as a cofactor. In terms of processing, the disulfide bond which can form in the large chain dimeric partners within the hexadecamer appears to be associated with oxidative stress and protein turnover.

Its subcellular location is the plastid. The protein localises to the chloroplast. The catalysed reaction is 2 (2R)-3-phosphoglycerate + 2 H(+) = D-ribulose 1,5-bisphosphate + CO2 + H2O. It catalyses the reaction D-ribulose 1,5-bisphosphate + O2 = 2-phosphoglycolate + (2R)-3-phosphoglycerate + 2 H(+). Functionally, ruBisCO catalyzes two reactions: the carboxylation of D-ribulose 1,5-bisphosphate, the primary event in carbon dioxide fixation, as well as the oxidative fragmentation of the pentose substrate in the photorespiration process. Both reactions occur simultaneously and in competition at the same active site. The polypeptide is Ribulose bisphosphate carboxylase large chain (Pinguicula caerulea (Blueflower butterwort)).